We begin with the raw amino-acid sequence, 578 residues long: MICOS complex subunit MIC60 (578 aa).

The N-terminal 28 residues, 1–28 (MIRTSVRRVVVNSNKFDVRSISNSSIRF), are a transit peptide targeting the mitochondrion. The Mitochondrial matrix portion of the chain corresponds to 29–68 (NVPNNQRTPPPAVRPPTSPIIVTEGGPKGGSQKQKKKFSF). A helical membrane pass occupies residues 69–91 (AGFLFKTAFWASVVYGGTLFVAT). Topologically, residues 92 to 578 (KNDKVMDFIM…KIIDAESKIL (487 aa)) are mitochondrial intermembrane. Residues 169-191 (LGTSTGAKPRQAIPEGNSAPTPA) are disordered. A coiled-coil region spans residues 248-317 (ESLMREITEN…HEKAQMEKKL (70 aa)).

Belongs to the MICOS complex subunit Mic60 family. As to quaternary structure, component of the mitochondrial contact site and cristae organizing system (MICOS) complex.

It localises to the mitochondrion inner membrane. In terms of biological role, component of the MICOS complex, a large protein complex of the mitochondrial inner membrane that plays crucial roles in the maintenance of crista junctions, inner membrane architecture, and formation of contact sites to the outer membrane. Plays a role in keeping cristae membranes connected to the inner boundary membrane. Also promotes protein import via the mitochondrial intermembrane space assembly (MIA) pathway. The chain is MICOS complex subunit MIC60 (MIC60) from Debaryomyces hansenii (strain ATCC 36239 / CBS 767 / BCRC 21394 / JCM 1990 / NBRC 0083 / IGC 2968) (Yeast).